A 437-amino-acid chain; its full sequence is Transcriptional modulator WTM1 (437 aa).

The WD 1 repeat unit spans residues 103-144 (YQGETVSKMAYLDKTGETTLLSMSKNGSLAWFKEGIKVPIHI). T187 bears the Phosphothreonine mark. S200 is subject to Phosphoserine. WD repeat units lie at residues 221-259 (PGTT…KPIW), 264-304 (PKNG…AATT), and 326-366 (AGGD…SKYN). A disordered region spans residues 368–404 (DDTIAPPQDATEESQTKSLRFLHKGGSRRSPKQIGRR). Phosphothreonine is present on T370. Positions 387–402 (RFLHKGGSRRSPKQIG) are enriched in basic residues. Position 406 is a phosphothreonine (T406).

Interacts with KAP122.

Its subcellular location is the cytoplasm. The protein resides in the nucleus. Its function is as follows. Transcriptional modulator with roles in meiotic regulation and silencing. Acts either as an adapter to facilitate nuclear import by KAP122 of the RNR2-RNR4 heterodimer, also called beta-beta' subunit, which corresponds to the small subunit of the ribonucleotide reductase (RNR); or as an anchor to retain RNR2-RNR4 in the nucleus. This is Transcriptional modulator WTM1 (WTM1) from Saccharomyces cerevisiae (strain ATCC 204508 / S288c) (Baker's yeast).